Here is a 361-residue protein sequence, read N- to C-terminus: Phosphoserine aminotransferase (361 aa).

Residue arginine 43 participates in L-glutamate binding. Pyridoxal 5'-phosphate contacts are provided by residues alanine 77 to serine 78, tryptophan 103, threonine 153, aspartate 173, and glutamine 196. Lysine 197 is modified (N6-(pyridoxal phosphate)lysine). Asparagine 238–threonine 239 lines the pyridoxal 5'-phosphate pocket.

The protein belongs to the class-V pyridoxal-phosphate-dependent aminotransferase family. SerC subfamily. Homodimer. Pyridoxal 5'-phosphate serves as cofactor.

The protein localises to the cytoplasm. It carries out the reaction O-phospho-L-serine + 2-oxoglutarate = 3-phosphooxypyruvate + L-glutamate. The catalysed reaction is 4-(phosphooxy)-L-threonine + 2-oxoglutarate = (R)-3-hydroxy-2-oxo-4-phosphooxybutanoate + L-glutamate. It functions in the pathway amino-acid biosynthesis; L-serine biosynthesis; L-serine from 3-phospho-D-glycerate: step 2/3. The protein operates within cofactor biosynthesis; pyridoxine 5'-phosphate biosynthesis; pyridoxine 5'-phosphate from D-erythrose 4-phosphate: step 3/5. Its function is as follows. Catalyzes the reversible conversion of 3-phosphohydroxypyruvate to phosphoserine and of 3-hydroxy-2-oxo-4-phosphonooxybutanoate to phosphohydroxythreonine. The chain is Phosphoserine aminotransferase from Pseudomonas entomophila (strain L48).